We begin with the raw amino-acid sequence, 488 residues long: Monodehydroascorbate reductase 4, peroxisomal (488 aa).

The Cytoplasmic portion of the chain corresponds to 1-3 (MGR). A helical membrane pass occupies residues 4 to 24 (AFVYVILGGGVAAGYAALEFT). Residues 12–15 (GGVA), Glu39, Arg46, Lys51, and 145–146 (RD) contribute to the FAD site. Topologically, residues 25–458 (RRGVSDGELC…SASVVMIKKP (434 aa)) are peroxisomal. NAD(+) contacts are provided by residues 170-176 (GGYIGME), Glu194, Arg200, and Gly259. Position 172–176 (172–176 (YIGME)) interacts with NADP(+). NADP(+) is bound by residues Arg200 and Gly259. Asp296 is an FAD binding site. 312–313 (EH) serves as a coordination point for NAD(+). 312 to 313 (EH) provides a ligand contact to NADP(+). FAD is bound at residue Val314. Arg318 serves as a coordination point for L-ascorbate. Residue Tyr344 coordinates FAD. NAD(+) is bound at residue Tyr344. An NADP(+)-binding site is contributed by Tyr344. Arg346 is a binding site for L-ascorbate. Residues 459–479 (LYVWHAATGVVVAASVAAFAF) traverse the membrane as a helical segment. At 480–488 (WYGRRRRRW) the chain is on the cytoplasmic side.

The protein belongs to the FAD-dependent oxidoreductase family. Requires FAD as cofactor.

It localises to the peroxisome membrane. The catalysed reaction is 2 monodehydro-L-ascorbate radical + NADH + H(+) = 2 L-ascorbate + NAD(+). Catalyzes the conversion of monodehydroascorbate to ascorbate, oxidizing NADH in the process. Involved in the detoxification of H(2)O(2) that escapes the peroxisome and causes oxidative damage to oil bodies. The sequence is that of Monodehydroascorbate reductase 4, peroxisomal from Arabidopsis thaliana (Mouse-ear cress).